Reading from the N-terminus, the 39-residue chain is Cytochrome b559 subunit beta (39 aa).

A helical transmembrane segment spans residues 14-30 (WLAVHGLAIPTVFFLGS). Histidine 18 provides a ligand contact to heme.

The protein belongs to the PsbE/PsbF family. As to quaternary structure, heterodimer of an alpha subunit and a beta subunit. PSII is composed of 1 copy each of membrane proteins PsbA, PsbB, PsbC, PsbD, PsbE, PsbF, PsbH, PsbI, PsbJ, PsbK, PsbL, PsbM, PsbT, PsbX, PsbY, PsbZ, Psb30/Ycf12, at least 3 peripheral proteins of the oxygen-evolving complex and a large number of cofactors. It forms dimeric complexes. Requires heme b as cofactor.

The protein localises to the plastid membrane. Its function is as follows. This b-type cytochrome is tightly associated with the reaction center of photosystem II (PSII). PSII is a light-driven water:plastoquinone oxidoreductase that uses light energy to abstract electrons from H(2)O, generating O(2) and a proton gradient subsequently used for ATP formation. It consists of a core antenna complex that captures photons, and an electron transfer chain that converts photonic excitation into a charge separation. This Cuscuta gronovii (Common dodder) protein is Cytochrome b559 subunit beta.